A 118-amino-acid polypeptide reads, in one-letter code: NADPH-dependent 7-cyano-7-deazaguanine reductase (118 aa).

Residue Cys-34 is the Thioimide intermediate of the active site. The Proton donor role is filled by Asp-41. Substrate contacts are provided by residues 56-58 (VEL) and 75-76 (HE).

This sequence belongs to the GTP cyclohydrolase I family. QueF type 1 subfamily.

It is found in the cytoplasm. The catalysed reaction is 7-aminomethyl-7-carbaguanine + 2 NADP(+) = 7-cyano-7-deazaguanine + 2 NADPH + 3 H(+). The protein operates within tRNA modification; tRNA-queuosine biosynthesis. Functionally, catalyzes the NADPH-dependent reduction of 7-cyano-7-deazaguanine (preQ0) to 7-aminomethyl-7-deazaguanine (preQ1). This Halorhodospira halophila (strain DSM 244 / SL1) (Ectothiorhodospira halophila (strain DSM 244 / SL1)) protein is NADPH-dependent 7-cyano-7-deazaguanine reductase.